The chain runs to 84 residues: Molybdopterin synthase sulfur carrier subunit (84 aa).

Residue Gly84 is modified to 1-thioglycine; alternate. A Glycyl adenylate; alternate modification is found at Gly84.

The protein belongs to the MoaD family. MOCS2A subfamily. Heterotetramer; composed of 2 small (MOCS2A) and 2 large (MOCS2B) subunits. Post-translationally, C-terminal thiocarboxylation occurs in 2 steps, it is first acyl-adenylated (-COAMP) via the hesA/moeB/thiF part of MOCS3, then thiocarboxylated (-COSH) via the rhodanese domain of MOCS3.

Its subcellular location is the cytoplasm. Its pathway is cofactor biosynthesis; molybdopterin biosynthesis. In terms of biological role, acts as a sulfur carrier required for molybdopterin biosynthesis. Component of the molybdopterin synthase complex that catalyzes the conversion of precursor Z into molybdopterin by mediating the incorporation of 2 sulfur atoms into precursor Z to generate a dithiolene group. In the complex, serves as sulfur donor by being thiocarboxylated (-COSH) at its C-terminus by MOCS3. After interaction with MOCS2B, the sulfur is then transferred to precursor Z to form molybdopterin. In Caenorhabditis elegans, this protein is Molybdopterin synthase sulfur carrier subunit.